Reading from the N-terminus, the 688-residue chain is Sodium channel and clathrin linker 1 (688 aa).

Ala2 is modified (N-acetylalanine). The stretch at 69–673 (ELNGQLKYYQ…SASQQLSVIT (605 aa)) forms a coiled coil. A Phosphoserine modification is found at Ser681.

Interacts with SCN10A and clathrin. Identified in a complex containing SCN10A, clathrin and SCLT1.

The protein resides in the cytoplasm. Its subcellular location is the cytoskeleton. The protein localises to the microtubule organizing center. It is found in the centrosome. It localises to the centriole. Its function is as follows. Adapter protein that links SCN10A to clathrin. Regulates SCN10A channel activity, possibly by promoting channel internalization. The sequence is that of Sodium channel and clathrin linker 1 (SCLT1) from Homo sapiens (Human).